The following is a 580-amino-acid chain: uncharacterized protein (580 aa).

Polar residues predominate over residues Met1–Gln44. Residues Met1 to Val45 are disordered. Ser99 is subject to Phosphoserine. 12 helical membrane passes run Ile143 to Ala163, Leu177 to Met197, Leu207 to Ile227, Phe235 to Met255, Ile265 to Phe285, Trp295 to Cys315, Pro370 to Leu390, Leu405 to Ile425, Leu450 to Ser470, Val476 to Phe496, Ala511 to Ala533, and Gly546 to Phe566.

The protein belongs to the major facilitator superfamily. CAR1 family.

The protein localises to the membrane. This is an uncharacterized protein from Schizosaccharomyces pombe (strain 972 / ATCC 24843) (Fission yeast).